The primary structure comprises 465 residues: CUGBP Elav-like family member 3 (465 aa).

2 RRM domains span residues 7–88 (IKLF…PADS) and 95–174 (KLFV…FADT). 2 disordered regions span residues 283–311 (PVPTQPTGQPAPDALYPNGVHPYPAQSPA) and 345–379 (PPALVAQQPPPPPQQQQQQQQQQQQQQQQREGPDG). Positions 345 to 358 (PPALVAQQPPPPPQ) are enriched in pro residues. The span at 359–373 (QQQQQQQQQQQQQQQ) shows a compositional bias: low complexity. An RRM 3 domain is found at 380–458 (CNIFIYHLPQ…KRLKVQLKRP (79 aa)).

It belongs to the CELF/BRUNOL family.

It is found in the nucleus. Its subcellular location is the cytoplasm. Functionally, RNA-binding protein involved in the regulation of pre-mRNA alternative splicing. Mediates exon inclusion and/or exclusion in pre-mRNA that are subject to tissue-specific and developmentally regulated alternative splicing. Specifically activates exon 5 inclusion of cardiac isoforms of TNNT2 during heart remodeling at the juvenile to adult transition. Activates the splicing of MAPT/Tau exon 10. Binds to muscle-specific splicing enhancer (MSE) intronic sites flanking the alternative exon 5 of TNNT2 pre-mRNA. The sequence is that of CUGBP Elav-like family member 3 (Celf3) from Mus musculus (Mouse).